Consider the following 83-residue polypeptide: Small ribosomal subunit protein eS21 (83 aa).

This sequence belongs to the eukaryotic ribosomal protein eS21 family. As to quaternary structure, component of the 40S small ribosomal subunit. Interacts with sta.

The protein localises to the cytoplasm. The protein resides in the cytosol. It localises to the rough endoplasmic reticulum. The polypeptide is Small ribosomal subunit protein eS21 (RpS21) (Ceratitis capitata (Mediterranean fruit fly)).